The primary structure comprises 539 residues: Hydroxylamine reductase (539 aa).

The [4Fe-4S] cluster site is built by C3, C6, C15, and C21. H235, E259, C303, C394, C422, C447, E482, and K484 together coordinate hybrid [4Fe-2O-2S] cluster. Cysteine persulfide is present on C394.

The protein belongs to the HCP family. [4Fe-4S] cluster is required as a cofactor. Hybrid [4Fe-2O-2S] cluster serves as cofactor.

The protein resides in the cytoplasm. It carries out the reaction A + NH4(+) + H2O = hydroxylamine + AH2 + H(+). In terms of biological role, catalyzes the reduction of hydroxylamine to form NH(3) and H(2)O. The chain is Hydroxylamine reductase from Methanocaldococcus jannaschii (strain ATCC 43067 / DSM 2661 / JAL-1 / JCM 10045 / NBRC 100440) (Methanococcus jannaschii).